We begin with the raw amino-acid sequence, 696 residues long: Zinc finger SWIM domain-containing protein 3 (696 aa).

The SWIM-type zinc-finger motif lies at 531–572; the sequence is VDVQLLEDSHQVSKDGCSCSCSFQQWYHLPCRHILALLHTSQ.

This is Zinc finger SWIM domain-containing protein 3 (ZSWIM3) from Homo sapiens (Human).